We begin with the raw amino-acid sequence, 645 residues long: Translation factor GUF1 homolog, mitochondrial (645 aa).

Positions 40–215 (EKIRNFGIVA…AIVERVPAPT (176 aa)) constitute a tr-type G domain. Residues 49–56 (AHVDHGKS), 108–112 (DTPGH), and 162–165 (NKID) each bind GTP.

The protein belongs to the TRAFAC class translation factor GTPase superfamily. Classic translation factor GTPase family. LepA subfamily.

The protein resides in the mitochondrion inner membrane. It carries out the reaction GTP + H2O = GDP + phosphate + H(+). Functionally, promotes mitochondrial protein synthesis. May act as a fidelity factor of the translation reaction, by catalyzing a one-codon backward translocation of tRNAs on improperly translocated ribosomes. Binds to mitochondrial ribosomes in a GTP-dependent manner. The chain is Translation factor GUF1 homolog, mitochondrial from Caenorhabditis briggsae.